The sequence spans 569 residues: Alpha-keto-acid decarboxylase (569 aa).

E57 provides a ligand contact to thiamine diphosphate. The thiamine pyrophosphate binding stretch occupies residues 392-474; it reads TAFYGMVEHR…VVVNNDGYTI (83 aa). Residues D442, N469, and G471 each contribute to the Mg(2+) site.

The protein belongs to the TPP enzyme family. A metal cation is required as a cofactor. Thiamine diphosphate serves as cofactor.

Its function is as follows. Decarboxylates branched-chain and aromatic alpha-keto acids to aldehydes. The chain is Alpha-keto-acid decarboxylase (kdc) from Mycobacterium leprae (strain TN).